The primary structure comprises 238 residues: Uridylate kinase (238 aa).

13–16 (KLSG) contacts ATP. Gly-53 is a UMP binding site. ATP contacts are provided by Gly-54 and Arg-58. UMP is bound by residues Asp-73 and 134–141 (AGLPYFST). ATP contacts are provided by Asn-162, Tyr-168, and Asp-171.

The protein belongs to the UMP kinase family. In terms of assembly, homohexamer.

It localises to the cytoplasm. The enzyme catalyses UMP + ATP = UDP + ADP. It functions in the pathway pyrimidine metabolism; CTP biosynthesis via de novo pathway; UDP from UMP (UMPK route): step 1/1. Inhibited by UTP. In terms of biological role, catalyzes the reversible phosphorylation of UMP to UDP. This is Uridylate kinase from Clavibacter michiganensis subsp. michiganensis (strain NCPPB 382).